A 166-amino-acid chain; its full sequence is Interleukin-3 (166 aa).

Residues 1-26 (MVLASSTTSIHTMLLLLLMLFHLGLQ) form the signal peptide. Residue Asn42 is glycosylated (N-linked (GlcNAc...) asparagine). 2 cysteine pairs are disulfide-bonded: Cys43/Cys106 and Cys105/Cys166. N-linked (GlcNAc...) asparagine; partial glycosylation is present at Asn112. A disordered region spans residues 145–166 (LTSRPPQPASGSVSPNRGTVEC).

This sequence belongs to the IL-3 family. In terms of assembly, monomer. In terms of tissue distribution, activated T-cells, mast cells, natural killer cells.

The protein resides in the secreted. Its function is as follows. Cytokine secreted predominantly by activated T-lymphocytes as well as mast cells and osteoblastic cells that controls the production and differentiation of hematopoietic progenitor cells into lineage-restricted cells. Also stimulates mature basophils, eosinophils, and monocytes to become functionally activated. In addition, plays an important role in neural cell proliferation and survival. Participates as well in bone homeostasis and inhibits osteoclast differentiation by preventing NF-kappa-B nuclear translocation and activation. Mechanistically, exerts its biological effects through a receptor composed of IL3RA subunit and a signal transducing subunit IL3RB. Receptor stimulation results in the rapid activation of JAK2 kinase activity leading to STAT5-mediated transcriptional program. Alternatively, contributes to cell survival under oxidative stress in non-hematopoietic systems by activating pathways mediated by PI3K/AKT and ERK. The polypeptide is Interleukin-3 (Il3) (Mus musculus (Mouse)).